We begin with the raw amino-acid sequence, 214 residues long: Guanylate kinase (214 aa).

One can recognise a Guanylate kinase-like domain in the interval 6-192; it reads GTLYIISAPS…ALEDLKSIFR (187 aa). 13 to 20 lines the ATP pocket; that stretch reads APSGAGKT.

The protein belongs to the guanylate kinase family.

The protein resides in the cytoplasm. It carries out the reaction GMP + ATP = GDP + ADP. Essential for recycling GMP and indirectly, cGMP. In Pseudomonas syringae pv. tomato (strain ATCC BAA-871 / DC3000), this protein is Guanylate kinase.